The primary structure comprises 442 residues: Mitochondrial distribution and morphology protein 12 (442 aa).

Residues 1–442 (MSIDINWEAA…VYPSFWTFLV (442 aa)) form the SMP-LTD domain. Disordered regions lie at residues 67–125 (NDFY…RVGY), 202–277 (LSLA…RRMR), and 364–387 (EGYH…RRSN). Positions 69–80 (FYEEDEDGEDLS) are enriched in acidic residues. Residues 90–100 (PSSQGLSQSTP) show a composition bias toward polar residues. The span at 101-112 (NGDAGSSNSSSN) shows a compositional bias: low complexity. The segment covering 213–222 (RQRERARSSD) has biased composition (basic and acidic residues). Residues 227-245 (SPQSRSRPSTSSTRQRTST) show a composition bias toward low complexity.

Belongs to the MDM12 family. Component of the ER-mitochondria encounter structure (ERMES) or MDM complex, composed of MMM1, MDM10, MDM12 and MDM34. An MMM1 homodimer associates with one molecule of MDM12 on each side in a pairwise head-to-tail manner, and the SMP-LTD domains of MMM1 and MDM12 generate a continuous hydrophobic tunnel for phospholipid trafficking.

It is found in the mitochondrion outer membrane. The protein localises to the endoplasmic reticulum membrane. Functionally, component of the ERMES/MDM complex, which serves as a molecular tether to connect the endoplasmic reticulum (ER) and mitochondria. Components of this complex are involved in the control of mitochondrial shape and protein biogenesis, and function in nonvesicular lipid trafficking between the ER and mitochondria. MDM12 is required for the interaction of the ER-resident membrane protein MMM1 and the outer mitochondrial membrane-resident beta-barrel protein MDM10. The MDM12-MMM1 subcomplex functions in the major beta-barrel assembly pathway that is responsible for biogenesis of all mitochondrial outer membrane beta-barrel proteins, and acts in a late step after the SAM complex. The MDM10-MDM12-MMM1 subcomplex further acts in the TOM40-specific pathway after the action of the MDM12-MMM1 complex. Essential for establishing and maintaining the structure of mitochondria and maintenance of mtDNA nucleoids. This Arthroderma otae (strain ATCC MYA-4605 / CBS 113480) (Microsporum canis) protein is Mitochondrial distribution and morphology protein 12.